Consider the following 492-residue polypeptide: Serine carboxypeptidase-like 31 (492 aa).

A signal peptide spans 1 to 30 (MDNYQTKNISNLLTSLCFTTLLILAPVVIC). 3 disulfides stabilise this stretch: cysteine 105–cysteine 376, cysteine 270–cysteine 283, and cysteine 307–cysteine 344. Asparagine 156 carries N-linked (GlcNAc...) asparagine glycosylation. Serine 198 is a catalytic residue. 2 N-linked (GlcNAc...) asparagine glycosylation sites follow: asparagine 221 and asparagine 271. N-linked (GlcNAc...) asparagine glycosylation is found at asparagine 372 and asparagine 383. Active-site residues include aspartate 413 and histidine 465.

This sequence belongs to the peptidase S10 family. In terms of tissue distribution, expressed in roots, senescent leaves, stems, flowers and siliques.

Its subcellular location is the secreted. Probable carboxypeptidase. The polypeptide is Serine carboxypeptidase-like 31 (SCPL31) (Arabidopsis thaliana (Mouse-ear cress)).